The following is a 309-amino-acid chain: Homoserine O-succinyltransferase (309 aa).

The active-site Acyl-thioester intermediate is the C142. The substrate site is built by K163 and S192. Residue H235 is the Proton acceptor of the active site. E237 is an active-site residue. Position 249 (R249) interacts with substrate.

The protein belongs to the MetA family. As to quaternary structure, homodimer.

Its subcellular location is the cytoplasm. The catalysed reaction is L-homoserine + succinyl-CoA = O-succinyl-L-homoserine + CoA. It functions in the pathway amino-acid biosynthesis; L-methionine biosynthesis via de novo pathway; O-succinyl-L-homoserine from L-homoserine: step 1/1. Its function is as follows. Transfers a succinyl group from succinyl-CoA to L-homoserine, forming succinyl-L-homoserine. The polypeptide is Homoserine O-succinyltransferase (Escherichia coli O139:H28 (strain E24377A / ETEC)).